The sequence spans 955 residues: Valine--tRNA ligase (955 aa).

Residues 41-51 carry the 'HIGH' region motif; sequence PNITGSLHMGH. Residues 554–558 carry the 'KMSKS' region motif; sequence KMSKS. K557 provides a ligand contact to ATP. Residues 926-946 are a coiled coil; the sequence is QEKNKLLKLNEINLKLSEQIK.

The protein belongs to the class-I aminoacyl-tRNA synthetase family. ValS type 1 subfamily. In terms of assembly, monomer.

The protein resides in the cytoplasm. It catalyses the reaction tRNA(Val) + L-valine + ATP = L-valyl-tRNA(Val) + AMP + diphosphate. In terms of biological role, catalyzes the attachment of valine to tRNA(Val). As ValRS can inadvertently accommodate and process structurally similar amino acids such as threonine, to avoid such errors, it has a 'posttransfer' editing activity that hydrolyzes mischarged Thr-tRNA(Val) in a tRNA-dependent manner. The protein is Valine--tRNA ligase of Buchnera aphidicola subsp. Acyrthosiphon pisum (strain APS) (Acyrthosiphon pisum symbiotic bacterium).